The primary structure comprises 492 residues: Cytochrome P450 2B19 (492 aa).

S129 is modified (phosphoserine; by PKA). C437 contacts heme.

It belongs to the cytochrome P450 family. Heme serves as cofactor. In terms of tissue distribution, expressed only in differentiated keratinocytes in skin.

It is found in the endoplasmic reticulum membrane. Its subcellular location is the microsome membrane. It carries out the reaction an organic molecule + reduced [NADPH--hemoprotein reductase] + O2 = an alcohol + oxidized [NADPH--hemoprotein reductase] + H2O + H(+). In terms of biological role, cytochromes P450 are a group of heme-thiolate monooxygenases. In liver microsomes, this enzyme is involved in an NADPH-dependent electron transport pathway. It oxidizes a variety of structurally unrelated compounds, including steroids, fatty acids, and xenobiotics. This chain is Cytochrome P450 2B19 (Cyp2b19), found in Mus musculus (Mouse).